Here is a 157-residue protein sequence, read N- to C-terminus: Endoribonuclease YbeY (157 aa).

Residues H111, H115, and H121 each coordinate Zn(2+).

This sequence belongs to the endoribonuclease YbeY family. It depends on Zn(2+) as a cofactor.

The protein localises to the cytoplasm. Functionally, single strand-specific metallo-endoribonuclease involved in late-stage 70S ribosome quality control and in maturation of the 3' terminus of the 16S rRNA. In Pseudomonas entomophila (strain L48), this protein is Endoribonuclease YbeY.